The primary structure comprises 258 residues: Ubiquinone/menaquinone biosynthesis C-methyltransferase UbiE (258 aa).

S-adenosyl-L-methionine contacts are provided by residues Thr83, Asp104, and 130-131; that span reads DA.

Belongs to the class I-like SAM-binding methyltransferase superfamily. MenG/UbiE family.

The enzyme catalyses a 2-demethylmenaquinol + S-adenosyl-L-methionine = a menaquinol + S-adenosyl-L-homocysteine + H(+). It catalyses the reaction a 2-methoxy-6-(all-trans-polyprenyl)benzene-1,4-diol + S-adenosyl-L-methionine = a 5-methoxy-2-methyl-3-(all-trans-polyprenyl)benzene-1,4-diol + S-adenosyl-L-homocysteine + H(+). The protein operates within quinol/quinone metabolism; menaquinone biosynthesis; menaquinol from 1,4-dihydroxy-2-naphthoate: step 2/2. It participates in cofactor biosynthesis; ubiquinone biosynthesis. Methyltransferase required for the conversion of demethylmenaquinol (DMKH2) to menaquinol (MKH2) and the conversion of 2-polyprenyl-6-methoxy-1,4-benzoquinol (DDMQH2) to 2-polyprenyl-3-methyl-6-methoxy-1,4-benzoquinol (DMQH2). This Bordetella bronchiseptica (strain ATCC BAA-588 / NCTC 13252 / RB50) (Alcaligenes bronchisepticus) protein is Ubiquinone/menaquinone biosynthesis C-methyltransferase UbiE.